The chain runs to 210 residues: T-cell surface glycoprotein CD8 beta chain (210 aa).

The first 21 residues, 1-21 (MRPRLWLLLAAQLTVLHGNSV), serve as a signal peptide directing secretion. An Ig-like V-type domain is found at 22–132 (LQQTPAYIKV…ELTFGKGTQL (111 aa)). Over 22–170 (LQQTPAYIKV…ETQKGPLCSP (149 aa)) the chain is Extracellular. Cysteine 41 and cysteine 116 form a disulfide bridge. Asparagine 102 is a glycosylation site (N-linked (GlcNAc...) asparagine). Residues 171-191 (ITLGLLVAGVLVLLVSLGVAI) form a helical membrane-spanning segment. Residues 192–210 (HLCCRRRRARLRFMKQFYK) lie on the Cytoplasmic side of the membrane. At tyrosine 209 the chain carries Phosphotyrosine.

As to quaternary structure, forms disulfide-linked heterodimers with CD8A at the cell surface. Interacts with CD3D; this interaction couples TCR-CD3 with CD8. Interacts with LCK. Post-translationally, phosphorylated as a consequence of T-cell activation. Palmitoylated at the cytoplasmic tail and thereby targets the heterodimer CD8A/CD8B to lipid rafts unlike CD8A homodimers. As to expression, isoform 1, isoform 3, isoform 5, isoform 6, isoform 7 and isoform 8 are expressed in both thymus and peripheral CD8+ T-cells. Expression of isoform 1 is higher in thymus CD8+ T-cells than in peripheral CD8+ T-cells. Expression of isoform 6 is higher in peripheral CD8+ T-cells than in thymus CD8+ T-cells.

Its subcellular location is the cell membrane. It is found in the secreted. Functionally, integral membrane glycoprotein that plays an essential role in the immune response and serves multiple functions in responses against both external and internal offenses. In T-cells, functions primarily as a coreceptor for MHC class I molecule:peptide complex. The antigens presented by class I peptides are derived from cytosolic proteins while class II derived from extracellular proteins. Interacts simultaneously with the T-cell receptor (TCR) and the MHC class I proteins presented by antigen presenting cells (APCs). In turn, recruits the Src kinase LCK to the vicinity of the TCR-CD3 complex. A palmitoylation site in the cytoplasmic tail of CD8B chain contributes to partitioning of CD8 into the plasma membrane lipid rafts where signaling proteins are enriched. Once LCK recruited, it initiates different intracellular signaling pathways by phosphorylating various substrates ultimately leading to lymphokine production, motility, adhesion and activation of cytotoxic T-lymphocytes (CTLs). Additionally, plays a critical role in thymic selection of CD8+ T-cells. In Homo sapiens (Human), this protein is T-cell surface glycoprotein CD8 beta chain (CD8B).